The sequence spans 388 residues: Succinate--CoA ligase [ADP-forming] subunit beta (388 aa).

An ATP-grasp domain is found at 9-244; sequence KGILSGFDVR…PHEYSEEELE (236 aa). Residues lysine 46, 53-55, glutamate 99, valine 102, and glutamate 107 each bind ATP; that span reads GRG. Residues asparagine 199 and aspartate 213 each contribute to the Mg(2+) site. Substrate is bound by residues asparagine 264 and 320–322; that span reads GIM.

This sequence belongs to the succinate/malate CoA ligase beta subunit family. In terms of assembly, heterotetramer of two alpha and two beta subunits. The cofactor is Mg(2+).

The enzyme catalyses succinate + ATP + CoA = succinyl-CoA + ADP + phosphate. It catalyses the reaction GTP + succinate + CoA = succinyl-CoA + GDP + phosphate. The protein operates within carbohydrate metabolism; tricarboxylic acid cycle; succinate from succinyl-CoA (ligase route): step 1/1. Its function is as follows. Succinyl-CoA synthetase functions in the citric acid cycle (TCA), coupling the hydrolysis of succinyl-CoA to the synthesis of either ATP or GTP and thus represents the only step of substrate-level phosphorylation in the TCA. The beta subunit provides nucleotide specificity of the enzyme and binds the substrate succinate, while the binding sites for coenzyme A and phosphate are found in the alpha subunit. This chain is Succinate--CoA ligase [ADP-forming] subunit beta, found in Anaplasma phagocytophilum (strain HZ).